The chain runs to 600 residues: Probable methyltransferase PMT7 (600 aa).

Topologically, residues 1–15 are cytoplasmic; it reads MGGGYVLFGSARSGQ. The chain crosses the membrane as a helical; Signal-anchor for type II membrane protein span at residues 16-36; sequence MIMVALVLMVGSFYAGSIFGN. Residues 37–600 lie on the Lumenal side of the membrane; sequence NSPIYISQPS…FCRKKFWAIL (564 aa). 9 N-linked (GlcNAc...) asparagine glycosylation sites follow: Asn49, Asn98, Asn110, Asn157, Asn200, Asn204, Asn334, Asn447, and Asn484.

The protein belongs to the methyltransferase superfamily.

The protein localises to the golgi apparatus membrane. This is Probable methyltransferase PMT7 from Arabidopsis thaliana (Mouse-ear cress).